An 86-amino-acid polypeptide reads, in one-letter code: Large ribosomal subunit protein uL23 (86 aa).

The protein belongs to the universal ribosomal protein uL23 family. As to quaternary structure, part of the 50S ribosomal subunit. Contacts protein L29.

In terms of biological role, binds to 23S rRNA. One of the proteins that surrounds the polypeptide exit tunnel on the outside of the ribosome. This Methanococcus aeolicus (strain ATCC BAA-1280 / DSM 17508 / OCM 812 / Nankai-3) protein is Large ribosomal subunit protein uL23.